Here is an 819-residue protein sequence, read N- to C-terminus: Lon protease (819 aa).

The tract at residues 1–36 is disordered; sequence MDSTTNSDSPILDPNPEDVEKLLDESEEESEDQSTE. Residues 43–240 enclose the Lon N-terminal domain; sequence LFILPLNKRP…KALILLKKEL (198 aa). ATP is bound at residue 393–400; that stretch reads GPPGVGKT. Positions 635–817 constitute a Lon proteolytic domain; that stretch reads STPVGVATGL…DDVLKVAFPK (183 aa). Residues serine 723 and lysine 766 contribute to the active site.

This sequence belongs to the peptidase S16 family. As to quaternary structure, homohexamer. Organized in a ring with a central cavity.

The protein resides in the cytoplasm. The enzyme catalyses Hydrolysis of proteins in presence of ATP.. ATP-dependent serine protease that mediates the selective degradation of mutant and abnormal proteins as well as certain short-lived regulatory proteins. Required for cellular homeostasis and for survival from DNA damage and developmental changes induced by stress. Degrades polypeptides processively to yield small peptide fragments that are 5 to 10 amino acids long. Binds to DNA in a double-stranded, site-specific manner. The sequence is that of Lon protease from Chlamydia pneumoniae (Chlamydophila pneumoniae).